A 349-amino-acid chain; its full sequence is Core protein VP7 (349 aa).

Residue asparagine 287 is glycosylated (N-linked (GlcNAc...) asparagine; by host).

It belongs to the orbivirus VP7 family. In terms of assembly, homotrimer that assemble in a complex of 260 capsomers on an inner scaffold composed of VP3.

Its subcellular location is the virion. Its function is as follows. The VP7 protein is one of the five proteins (with VP1, VP3, VP4, and VP6) which form the inner capsid of the virus. The protein is Core protein VP7 (Segment-7) of Antilocapra americana (Pronghorn).